The following is a 417-amino-acid chain: UDP-N-acetylglucosamine 1-carboxyvinyltransferase (417 aa).

A phosphoenolpyruvate-binding site is contributed by 22-23 (KN). A UDP-N-acetyl-alpha-D-glucosamine-binding site is contributed by R93. The active-site Proton donor is the C117. C117 carries the 2-(S-cysteinyl)pyruvic acid O-phosphothioketal modification. UDP-N-acetyl-alpha-D-glucosamine-binding positions include 122-126 (RPVDQ), D305, and I327.

This sequence belongs to the EPSP synthase family. MurA subfamily.

The protein resides in the cytoplasm. It catalyses the reaction phosphoenolpyruvate + UDP-N-acetyl-alpha-D-glucosamine = UDP-N-acetyl-3-O-(1-carboxyvinyl)-alpha-D-glucosamine + phosphate. The protein operates within cell wall biogenesis; peptidoglycan biosynthesis. In terms of biological role, cell wall formation. Adds enolpyruvyl to UDP-N-acetylglucosamine. This is UDP-N-acetylglucosamine 1-carboxyvinyltransferase from Chromobacterium violaceum (strain ATCC 12472 / DSM 30191 / JCM 1249 / CCUG 213 / NBRC 12614 / NCIMB 9131 / NCTC 9757 / MK).